The chain runs to 265 residues: RNA polymerase sigma factor SigI2 (265 aa).

Residues 71 to 84 (DEFSVGLAAFNEAI) carry the Polymerase core binding motif. The segment at residues 211 to 230 (KTELLKLLKINKKTIERNRT) is a DNA-binding region (H-T-H motif).

Belongs to the sigma-70 factor family. SigI subfamily. As to quaternary structure, interacts with RsgI2.

The protein localises to the cytoplasm. Negatively regulated by the anti-sigma-I factor RsgI2. Binding of the polysaccharide substrate to RsgI2 may lead to the release and activation of SigI2. Functionally, sigma factors are initiation factors that promote the attachment of RNA polymerase to specific initiation sites and are then released. This sigma factor is involved in regulation of cellulosomal genes via an external polysaccharide-sensing mechanism. The protein is RNA polymerase sigma factor SigI2 of Acetivibrio thermocellus (strain ATCC 27405 / DSM 1237 / JCM 9322 / NBRC 103400 / NCIMB 10682 / NRRL B-4536 / VPI 7372) (Clostridium thermocellum).